The following is a 594-amino-acid chain: MASSTPSSSATSSNAGPDPNTTNLRPTTYDTWCGVAHGCTRKLGLKICGFLQRTNSLEEKSRLVSAFKERQSSKNLLSCENSDRDGRFRRTETDFSNLFARDLLPAKNGEEQTVQFLLEVVDILLNYVRKTFDRSTKVLDFHHPHQLLEGMEGFNLELSDHPESLEQILVDCRDTLKYGVRTGHPRFFNQLSTGLDIIGLAGEWLTSTANTNMFTYEIAPVFVLMEQITLKKMREIVGWSNKDGDGIFSPGGAISNMYSIMAARYKYFPEVKTKGMAAVPKLVLFTSEHSHYSIKKAGAALGFGTDNVILIKCNERGKIIPADLEAKILEAKQKGYIPLYVNATAGTTVYGAFDPIQEIADICEKYNLWLHVDAAWGGGLLMSRKHRHKLSGIERADSVTWNPHKMMGVLLQCSAILVKEKGILQGCNQMCAGYLFQPDKQYDVSYDTGDKAIQCGRHVDIFKFWLMWKAKGTVGFENQINKCLELAEYLYAKIKNREEFEMVFDGEPEHTNVCFWYIPQSLRGVPDSPERREKLHRVAPKIKALMMESGTTMVGYQPQGDKANFFRMVISNPAATQSDIDFLIEEIERLGQDL.

Residues 1–13 (MASSTPSSSATSS) show a composition bias toward low complexity. Positions 1–25 (MASSTPSSSATSSNAGPDPNTTNLR) are disordered. Serine 78 carries the post-translational modification Phosphoserine. 4-aminobutanoate is bound at residue 190–192 (QLS). The residue at position 405 (lysine 405) is an N6-(pyridoxal phosphate)lysine. Arginine 567 serves as a coordination point for 4-aminobutanoate.

It belongs to the group II decarboxylase family. In terms of assembly, homodimer. It depends on pyridoxal 5'-phosphate as a cofactor.

It catalyses the reaction L-glutamate + H(+) = 4-aminobutanoate + CO2. Its function is as follows. Catalyzes the synthesis of the inhibitory neurotransmitter gamma-aminobutyric acid (GABA) with pyridoxal 5'-phosphate as cofactor. The polypeptide is Glutamate decarboxylase 1 (GAD1) (Sus scrofa (Pig)).